A 495-amino-acid chain; its full sequence is Genome polyprotein (495 aa).

Residues 1–445 lie on the Extracellular side of the membrane; it reads MRCIGISNRD…LNQVFGTIYG (445 aa). 4 disulfides stabilise this stretch: Cys3-Cys30, Cys60-Cys121, Cys74-Cys105, and Cys92-Cys116. The N-linked (GlcNAc...) asparagine; by host glycan is linked to Asn67. The segment at 98 to 111 is fusion peptide; sequence DRGWGNGCGLFGKG. N-linked (GlcNAc...) asparagine; by host glycosylation is present at Asn153. Cystine bridges form between Cys185–Cys285 and Cys302–Cys333. Residues 446–466 traverse the membrane as a helical segment; that stretch reads AAFSGVSWTMKILIGVIITCI. Residues 467–472 are Cytoplasmic-facing; sequence GMNSRS. A helical membrane pass occupies residues 473-493; it reads TSLSVSLVLVGVVTLYLGGMV. Over 494–495 the chain is Extracellular; that stretch reads HA.

In terms of assembly, homodimer; in the endoplasmic reticulum and Golgi. Interacts with protein prM. Interacts with non-structural protein 1. Post-translationally, N-glycosylated. In terms of processing, specific enzymatic cleavages in vivo yield mature proteins. Cleavages in the lumen of endoplasmic reticulum are performed by host signal peptidase, wereas cleavages in the cytoplasmic side are performed by serine protease NS3. Signal cleavage at the 2K-4B site requires a prior NS3 protease-mediated cleavage at the 4A-2K site.

It is found in the virion membrane. It localises to the host endoplasmic reticulum membrane. Binds to host cell surface receptor and mediates fusion between viral and cellular membranes. Envelope protein is synthesized in the endoplasmic reticulum in the form of heterodimer with protein prM. They play a role in virion budding in the ER, and the newly formed immature particle is covered with 60 spikes composed of heterodimer between precursor prM and envelope protein E. The virion is transported to the Golgi apparatus where the low pH causes dissociation of PrM-E heterodimers and formation of E homodimers. prM-E cleavage is inefficient, and many virions are only partially matured. These uncleaved prM would play a role in immune evasion. The protein is Genome polyprotein of Aedes aegypti (Yellowfever mosquito).